The primary structure comprises 466 residues: MAKTLYEKLFDAHVVYEAQNETPLLYIDRHLVHEVTSPQAFDGLRAHGRPVRQPGKTFATMDHNVSTQTKDINASGEMARIQMQELIKNCKAFGVELYDLNHPYQGIVHVMGPEQGVTLPGMTIVCGDSHTATHGAFGALAFGIGTSEVEHVLATQTLKQGRAKTMKIEVKGTAAPGITAKDIVLAIIGKTGSAGGTGHVVEFCGEAIRNLSMEGRMTLCNMAIEMGAKAGLVAPDDTTFNYVKGRLHAPKGSDFDDAVAYWKTLKTDDGATFDTVVTLQAEDIAPQVTWGTNPGQVISVNDNIPDPASFADPVERASAEKALAYMGLKPGIPLTDVAIDKVFIGSCTNSRIEDLRAAAEIAKGRKVAPGVQALVVPGSGPVKAQAEAEGLDKIFIEAGFEWRLPGCSMCLAMNNDRLNPGERCASTSNRNFEGRQGRGGRTHLVSPAMAAAAAVTGHFADIRSIK.

3 residues coordinate [4Fe-4S] cluster: cysteine 347, cysteine 407, and cysteine 410.

It belongs to the aconitase/IPM isomerase family. LeuC type 1 subfamily. As to quaternary structure, heterodimer of LeuC and LeuD. It depends on [4Fe-4S] cluster as a cofactor.

It carries out the reaction (2R,3S)-3-isopropylmalate = (2S)-2-isopropylmalate. It functions in the pathway amino-acid biosynthesis; L-leucine biosynthesis; L-leucine from 3-methyl-2-oxobutanoate: step 2/4. Functionally, catalyzes the isomerization between 2-isopropylmalate and 3-isopropylmalate, via the formation of 2-isopropylmaleate. In Citrobacter koseri (strain ATCC BAA-895 / CDC 4225-83 / SGSC4696), this protein is 3-isopropylmalate dehydratase large subunit.